A 298-amino-acid polypeptide reads, in one-letter code: Phosphatidylserine decarboxylase proenzyme (298 aa).

Active-site charge relay system; for autoendoproteolytic cleavage activity residues include aspartate 113, histidine 169, and serine 256. Serine 256 (schiff-base intermediate with substrate; via pyruvic acid; for decarboxylase activity) is an active-site residue. At serine 256 the chain carries Pyruvic acid (Ser); by autocatalysis.

It belongs to the phosphatidylserine decarboxylase family. PSD-B subfamily. Prokaryotic type II sub-subfamily. Heterodimer of a large membrane-associated beta subunit and a small pyruvoyl-containing alpha subunit. The cofactor is pyruvate. In terms of processing, is synthesized initially as an inactive proenzyme. Formation of the active enzyme involves a self-maturation process in which the active site pyruvoyl group is generated from an internal serine residue via an autocatalytic post-translational modification. Two non-identical subunits are generated from the proenzyme in this reaction, and the pyruvate is formed at the N-terminus of the alpha chain, which is derived from the carboxyl end of the proenzyme. The autoendoproteolytic cleavage occurs by a canonical serine protease mechanism, in which the side chain hydroxyl group of the serine supplies its oxygen atom to form the C-terminus of the beta chain, while the remainder of the serine residue undergoes an oxidative deamination to produce ammonia and the pyruvoyl prosthetic group on the alpha chain. During this reaction, the Ser that is part of the protease active site of the proenzyme becomes the pyruvoyl prosthetic group, which constitutes an essential element of the active site of the mature decarboxylase.

The protein localises to the cell membrane. It catalyses the reaction a 1,2-diacyl-sn-glycero-3-phospho-L-serine + H(+) = a 1,2-diacyl-sn-glycero-3-phosphoethanolamine + CO2. The protein operates within phospholipid metabolism; phosphatidylethanolamine biosynthesis; phosphatidylethanolamine from CDP-diacylglycerol: step 2/2. Functionally, catalyzes the formation of phosphatidylethanolamine (PtdEtn) from phosphatidylserine (PtdSer). This is Phosphatidylserine decarboxylase proenzyme from Desulfitobacterium hafniense (strain DSM 10664 / DCB-2).